The chain runs to 369 residues: PLRPGPATLGVLLGSDCPHPAVCEGCQRPISDRFLMRVNESSWHEECLQCAACQQALTTSCYFRDRKLYCKQDYQQLFAAKCSGCMEKIAPTEFVMRALECVYHLGCFCCCVCERQLRKGDEFVLKEGQLLCKGDYEKEKDLLSSVSPDESDSVKSEDEDGDMKPAKGQGSQSKGGGDDGKDPRRPKRPRTILTTQQRRAFKASFEVSSKPCRKVRETLAAETGLSVRVVQVWFQNQRAKMKKLARRHQQQQEQQNSQRLGQEVLSSRMEGMMASYTPLAPPQQQIVAMEQSPCGSSDPFQQGLTPPQMPGDHMNPYGNDSIFHDIDSDTSLTSLSDCFLGSSDVGSLQARVGNPIDRLYSMQSSYFAS.

LIM zinc-binding domains are found at residues 23-73 (CEGC…CKQD) and 82-135 (CSGC…CKGD). A disordered region spans residues 143–196 (LSSVSPDESDSVKSEDEDGDMKPAKGQGSQSKGGGDDGKDPRRPKRPRTILTTQ). The homeobox DNA-binding region spans 186–245 (PKRPRTILTTQQRRAFKASFEVSSKPCRKVRETLAAETGLSVRVVQVWFQNQRAKMKKLA).

As to quaternary structure, interacts with DHX9.

It localises to the nucleus. Transcription factor involved in the regulation of podocyte-expressed genes. Essential for the specification of dorsal limb fate at both the zeugopodal and autopodal levels. The protein is LIM homeobox transcription factor 1-beta (LMX1B) of Mesocricetus auratus (Golden hamster).